The sequence spans 200 residues: Probable GTP-binding protein EngB (200 aa).

In terms of domain architecture, EngB-type G spans 24–199 (EGAEVAFAGR…RGVIGGWLGL (176 aa)). Residues 32 to 39 (GRSNAGKS), 59 to 63 (GRTQQ), 77 to 80 (DLPG), 144 to 147 (TKAD), and 178 to 180 (FSG) contribute to the GTP site. Positions 39 and 61 each coordinate Mg(2+).

The protein belongs to the TRAFAC class TrmE-Era-EngA-EngB-Septin-like GTPase superfamily. EngB GTPase family. Mg(2+) is required as a cofactor.

Its function is as follows. Necessary for normal cell division and for the maintenance of normal septation. In Stenotrophomonas maltophilia (strain K279a), this protein is Probable GTP-binding protein EngB.